Reading from the N-terminus, the 747-residue chain is Sex-specific storage-protein 1 (747 aa).

An N-terminal signal peptide occupies residues 1–15 (MRVLVLLACLAAASA). N-linked (GlcNAc...) asparagine glycosylation is found at N494 and N706.

This sequence belongs to the hemocyanin family. In terms of tissue distribution, fat body.

The protein localises to the secreted. Its subcellular location is the extracellular space. Functionally, larval storage protein (LSP) which may serve as a store of amino acids for synthesis of adult proteins. This Bombyx mori (Silk moth) protein is Sex-specific storage-protein 1 (SP1).